Reading from the N-terminus, the 663-residue chain is DNA ligase 1 (663 aa).

Residues 30 to 34 and 78 to 79 contribute to the NAD(+) site; these read DAEYD and SL. Lys105 functions as the N6-AMP-lysine intermediate in the catalytic mechanism. Arg126, Glu161, and Lys294 together coordinate NAD(+). 4 residues coordinate Zn(2+): Cys389, Cys392, Cys407, and Cys412. The region spanning 574–663 is the BRCT domain; sequence AAGAPLAGKT…WAQLIEAKLV (90 aa).

It belongs to the NAD-dependent DNA ligase family. LigA subfamily. Requires Mg(2+) as cofactor. The cofactor is Mn(2+).

The enzyme catalyses NAD(+) + (deoxyribonucleotide)n-3'-hydroxyl + 5'-phospho-(deoxyribonucleotide)m = (deoxyribonucleotide)n+m + AMP + beta-nicotinamide D-nucleotide.. In terms of biological role, DNA ligase that catalyzes the formation of phosphodiester linkages between 5'-phosphoryl and 3'-hydroxyl groups in double-stranded DNA using NAD as a coenzyme and as the energy source for the reaction. It is essential for DNA replication and repair of damaged DNA. The polypeptide is DNA ligase 1 (Nocardia farcinica (strain IFM 10152)).